A 365-amino-acid chain; its full sequence is Mitogen-activated protein kinase p38b (365 aa).

Residues 24-311 form the Protein kinase domain; sequence YQNLQPVGQG…AEQALAHPYM (288 aa). ATP-binding positions include 30-38 and lysine 53; that span reads VGQGAYGQV. The active-site Proton acceptor is aspartate 153. Threonine 183 is subject to Phosphothreonine. A TXY motif is present at residues 183-185; it reads TGY. Tyrosine 185 carries the post-translational modification Phosphotyrosine.

Belongs to the protein kinase superfamily. CMGC Ser/Thr protein kinase family. MAP kinase subfamily. It depends on Mg(2+) as a cofactor. In terms of processing, dually phosphorylated on Thr-183 and Tyr-185, which activates the enzyme. At mid-embryogenesis, highest expression is seen in developing anterior and posterior midguts. Almost ubiquitous expression throughout all development.

The protein localises to the nucleus. It carries out the reaction L-seryl-[protein] + ATP = O-phospho-L-seryl-[protein] + ADP + H(+). It catalyses the reaction L-threonyl-[protein] + ATP = O-phospho-L-threonyl-[protein] + ADP + H(+). With respect to regulation, activated by threonine and tyrosine phosphorylation by Mkk3. Kinase involved in dpp signal transduction pathway in the process of wing morphogenesis when the levels of dpp are enhanced or inhibited. May down-regulate insect immunity gene expression after prolonged infection. In Drosophila melanogaster (Fruit fly), this protein is Mitogen-activated protein kinase p38b.